The sequence spans 1601 residues: Ras guanine nucleotide exchange factor glfB (1601 aa).

Disordered regions lie at residues 43–140 (PLLA…KEWD), 188–256 (DLLI…TTTT), 310–461 (SPQR…APDS), and 475–630 (LTTT…VKKG). The span at 45-55 (LAPPAPPPPPT) shows a compositional bias: pro residues. Over residues 57 to 69 (QEINIGSGNSTFI) the composition is skewed to polar residues. Residues 70–126 (SSNNNNSNNNNNNNSNNNNNNNLNNSNNNNNNLNSNNNNNNNNNNNNNNGNNNNNSN) show a composition bias toward low complexity. Ser197 carries the post-translational modification Phosphoserine. The residue at position 201 (Thr201) is a Phosphothreonine. Low complexity-rich tracts occupy residues 211 to 256 (QQQQ…TTTT) and 310 to 330 (SPQRVTTTTTTTTPSTGGVVV). Acidic residues predominate over residues 331 to 359 (ADEESDSSEEESDSSEEESDEYTDEESET). Polar residues predominate over residues 384–398 (PLTSVNSNDNTSSGT). 3 stretches are compositionally biased toward low complexity: residues 435 to 458 (TAVAASSISATTNVTSAASTTTVA), 475 to 493 (LTTTTSATSSTTSATTQSI), and 500 to 520 (SQQRAAQSISTSSVTPAAITK). The segment covering 521 to 533 (PTKDAKDKKDPAK) has biased composition (basic and acidic residues). Residues 558–577 (VPTGTSPPVSSSTSISSSTG) are compositionally biased toward low complexity. A compositionally biased stretch (basic and acidic residues) spans 578–596 (IKKDKVKLSKEEKDRIKKE). The Rho-GAP domain occupies 649–836 (VRLTQLVLSN…LIIDNYVFLF (188 aa)). The 133-residue stretch at 851–983 (GKMIISEGSI…TINDFLKLPK (133 aa)) folds into the N-terminal Ras-GEF domain. The Ras-GEF domain occupies 1021 to 1255 (SAMEIAEQCT…ADLSLKCEPP (235 aa)). Positions 1262–1601 (YNAPADIVDE…QESVPSTNAE (340 aa)) are N-terminal F-actin-binding domain. The segment at 1443–1474 (SNVEKEKLSSSQEQQEQQEQKQQEQQQQQQEP) is disordered. Over residues 1465–1474 (QEQQQQQQEP) the composition is skewed to low complexity.

Interacts with gpaB and rapA. Interacts directly with F-actin. In terms of processing, simultaneously phosphorylated at Ser-197 and Thr-201 after cAMP stimulation.

It is found in the cytoplasm. The protein localises to the cell cortex. The protein resides in the cytoskeleton. It localises to the cell projection. Its subcellular location is the filopodium. It is found in the lamellipodium. Functionally, gpaB-activated, rapA-specific guanine nucleotide exchange factor, involved in the regulation of the balance between Ras and Rap signaling at the leading edge of chemotaxing cells. Spatially localized activation of Rap and Ras induces F-actin polymerization at the leading edge of chemotaxing cells through the Rac, PI3K, and TORC2 pathways. Also acts as a key regulator of actin-driven membrane protrusions during processes such as phagocytosis and cytokinesis, possibly by modulating rapA signaling pathways. The protein is Ras guanine nucleotide exchange factor glfB of Dictyostelium discoideum (Social amoeba).